The primary structure comprises 339 residues: Ferrochelatase (339 aa).

2 residues coordinate Fe cation: His202 and Glu283.

It belongs to the ferrochelatase family.

Its subcellular location is the cytoplasm. The catalysed reaction is heme b + 2 H(+) = protoporphyrin IX + Fe(2+). Its pathway is porphyrin-containing compound metabolism; protoheme biosynthesis; protoheme from protoporphyrin-IX: step 1/1. Functionally, catalyzes the ferrous insertion into protoporphyrin IX. In Psychrobacter cryohalolentis (strain ATCC BAA-1226 / DSM 17306 / VKM B-2378 / K5), this protein is Ferrochelatase.